The sequence spans 502 residues: ATP synthase subunit alpha (502 aa).

169–176 (GDRQTGKT) lines the ATP pocket.

The protein belongs to the ATPase alpha/beta chains family. F-type ATPases have 2 components, CF(1) - the catalytic core - and CF(0) - the membrane proton channel. CF(1) has five subunits: alpha(3), beta(3), gamma(1), delta(1), epsilon(1). CF(0) has three main subunits: a(1), b(2) and c(9-12). The alpha and beta chains form an alternating ring which encloses part of the gamma chain. CF(1) is attached to CF(0) by a central stalk formed by the gamma and epsilon chains, while a peripheral stalk is formed by the delta and b chains.

It is found in the cell inner membrane. The catalysed reaction is ATP + H2O + 4 H(+)(in) = ADP + phosphate + 5 H(+)(out). Produces ATP from ADP in the presence of a proton gradient across the membrane. The alpha chain is a regulatory subunit. The polypeptide is ATP synthase subunit alpha (Nitratidesulfovibrio vulgaris (strain DSM 19637 / Miyazaki F) (Desulfovibrio vulgaris)).